Reading from the N-terminus, the 368-residue chain is 4-hydroxy-3-methylbut-2-en-1-yl diphosphate synthase (flavodoxin) (368 aa).

[4Fe-4S] cluster contacts are provided by Cys271, Cys274, Cys306, and Glu313.

Belongs to the IspG family. Requires [4Fe-4S] cluster as cofactor.

The enzyme catalyses (2E)-4-hydroxy-3-methylbut-2-enyl diphosphate + oxidized [flavodoxin] + H2O + 2 H(+) = 2-C-methyl-D-erythritol 2,4-cyclic diphosphate + reduced [flavodoxin]. It participates in isoprenoid biosynthesis; isopentenyl diphosphate biosynthesis via DXP pathway; isopentenyl diphosphate from 1-deoxy-D-xylulose 5-phosphate: step 5/6. Converts 2C-methyl-D-erythritol 2,4-cyclodiphosphate (ME-2,4cPP) into 1-hydroxy-2-methyl-2-(E)-butenyl 4-diphosphate. This chain is 4-hydroxy-3-methylbut-2-en-1-yl diphosphate synthase (flavodoxin), found in Haemophilus influenzae (strain ATCC 51907 / DSM 11121 / KW20 / Rd).